Here is a 285-residue protein sequence, read N- to C-terminus: ATP synthase gamma chain (285 aa).

The protein belongs to the ATPase gamma chain family. F-type ATPases have 2 components, CF(1) - the catalytic core - and CF(0) - the membrane proton channel. CF(1) has five subunits: alpha(3), beta(3), gamma(1), delta(1), epsilon(1). CF(0) has three main subunits: a, b and c.

The protein localises to the cell membrane. Produces ATP from ADP in the presence of a proton gradient across the membrane. The gamma chain is believed to be important in regulating ATPase activity and the flow of protons through the CF(0) complex. The chain is ATP synthase gamma chain from Dehalococcoides mccartyi (strain CBDB1).